We begin with the raw amino-acid sequence, 151 residues long: Large ribosomal subunit protein bL9 (151 aa).

The protein belongs to the bacterial ribosomal protein bL9 family.

Binds to the 23S rRNA. This chain is Large ribosomal subunit protein bL9, found in Francisella tularensis subsp. holarctica (strain LVS).